The sequence spans 534 residues: UDP-glucuronosyltransferase 2A3 (534 aa).

The N-terminal stretch at 1-18 (MVSEKCVAAFFLLQLCWA) is a signal peptide. Residues 19–493 (GCGFCSKVLV…SWFQYHSLDV (475 aa)) are Extracellular-facing. The N-linked (GlcNAc...) asparagine glycan is linked to Asn-102. Lys-135 is modified (N6-succinyllysine). An N-linked (GlcNAc...) asparagine glycan is attached at Asn-204. The helical transmembrane segment at 494–514 (IGFLLLCVVTLTFIITKFCLF) threads the bilayer. The Cytoplasmic segment spans residues 515 to 534 (VCQKLYMKESKKMGNRKKKN).

It belongs to the UDP-glycosyltransferase family. As to expression, highly expressed in liver, with lower levels in duodenum and jejunum.

The protein localises to the membrane. The enzyme catalyses glucuronate acceptor + UDP-alpha-D-glucuronate = acceptor beta-D-glucuronoside + UDP + H(+). UDP-glucuronosyltransferases catalyze phase II biotransformation reactions in which lipophilic substrates are conjugated with glucuronic acid to increase water solubility and enhance excretion. They are of major importance in the conjugation and subsequent elimination of potentially toxic xenobiotics and endogenous compounds. The protein is UDP-glucuronosyltransferase 2A3 (Ugt2a3) of Mus musculus (Mouse).